Here is a 191-residue protein sequence, read N- to C-terminus: Ankyrin repeat domain-containing protein 22 (191 aa).

ANK repeat units follow at residues 39 to 68 (NGDT…DVNL), 72 to 100 (KERT…MPVL), 101 to 130 (LIGY…EVNA), and 134 to 163 (DGYT…DPMI).

The polypeptide is Ankyrin repeat domain-containing protein 22 (Ankrd22) (Mus musculus (Mouse)).